A 207-amino-acid chain; its full sequence is Thiamine-phosphate synthase (207 aa).

4-amino-2-methyl-5-(diphosphooxymethyl)pyrimidine is bound by residues 36-40 (QLRMK) and N68. Residues D69 and D88 each contribute to the Mg(2+) site. S106 is a binding site for 4-amino-2-methyl-5-(diphosphooxymethyl)pyrimidine. 132–134 (TNT) serves as a coordination point for 2-[(2R,5Z)-2-carboxy-4-methylthiazol-5(2H)-ylidene]ethyl phosphate. Residue K135 participates in 4-amino-2-methyl-5-(diphosphooxymethyl)pyrimidine binding. Residues G162 and 182-183 (VS) contribute to the 2-[(2R,5Z)-2-carboxy-4-methylthiazol-5(2H)-ylidene]ethyl phosphate site.

It belongs to the thiamine-phosphate synthase family. It depends on Mg(2+) as a cofactor.

The enzyme catalyses 2-[(2R,5Z)-2-carboxy-4-methylthiazol-5(2H)-ylidene]ethyl phosphate + 4-amino-2-methyl-5-(diphosphooxymethyl)pyrimidine + 2 H(+) = thiamine phosphate + CO2 + diphosphate. The catalysed reaction is 2-(2-carboxy-4-methylthiazol-5-yl)ethyl phosphate + 4-amino-2-methyl-5-(diphosphooxymethyl)pyrimidine + 2 H(+) = thiamine phosphate + CO2 + diphosphate. It catalyses the reaction 4-methyl-5-(2-phosphooxyethyl)-thiazole + 4-amino-2-methyl-5-(diphosphooxymethyl)pyrimidine + H(+) = thiamine phosphate + diphosphate. The protein operates within cofactor biosynthesis; thiamine diphosphate biosynthesis; thiamine phosphate from 4-amino-2-methyl-5-diphosphomethylpyrimidine and 4-methyl-5-(2-phosphoethyl)-thiazole: step 1/1. Condenses 4-methyl-5-(beta-hydroxyethyl)thiazole monophosphate (THZ-P) and 2-methyl-4-amino-5-hydroxymethyl pyrimidine pyrophosphate (HMP-PP) to form thiamine monophosphate (TMP). In Methanococcus maripaludis (strain C6 / ATCC BAA-1332), this protein is Thiamine-phosphate synthase.